The primary structure comprises 227 residues: Phosphoribosylformylglycinamidine synthase subunit PurQ (227 aa).

Residues 3-225 form the Glutamine amidotransferase type-1 domain; that stretch reads FAVIVFPGSN…LKYWRETYVV (223 aa). The active-site Nucleophile is cysteine 86. Catalysis depends on residues histidine 194 and glutamate 196.

In terms of assembly, part of the FGAM synthase complex composed of 1 PurL, 1 PurQ and 2 PurS subunits.

It is found in the cytoplasm. It carries out the reaction N(2)-formyl-N(1)-(5-phospho-beta-D-ribosyl)glycinamide + L-glutamine + ATP + H2O = 2-formamido-N(1)-(5-O-phospho-beta-D-ribosyl)acetamidine + L-glutamate + ADP + phosphate + H(+). The catalysed reaction is L-glutamine + H2O = L-glutamate + NH4(+). The protein operates within purine metabolism; IMP biosynthesis via de novo pathway; 5-amino-1-(5-phospho-D-ribosyl)imidazole from N(2)-formyl-N(1)-(5-phospho-D-ribosyl)glycinamide: step 1/2. Functionally, part of the phosphoribosylformylglycinamidine synthase complex involved in the purines biosynthetic pathway. Catalyzes the ATP-dependent conversion of formylglycinamide ribonucleotide (FGAR) and glutamine to yield formylglycinamidine ribonucleotide (FGAM) and glutamate. The FGAM synthase complex is composed of three subunits. PurQ produces an ammonia molecule by converting glutamine to glutamate. PurL transfers the ammonia molecule to FGAR to form FGAM in an ATP-dependent manner. PurS interacts with PurQ and PurL and is thought to assist in the transfer of the ammonia molecule from PurQ to PurL. This Bacillus cytotoxicus (strain DSM 22905 / CIP 110041 / 391-98 / NVH 391-98) protein is Phosphoribosylformylglycinamidine synthase subunit PurQ.